The sequence spans 393 residues: Probable WRKY transcription factor 25 (393 aa).

A DNA-binding region (WRKY 1) is located at residues 160–224; sequence MVSRNSNDGY…YKGGHNHPKP (65 aa). Residues Cys-191, Cys-196, His-219, and His-221 each contribute to the Zn(2+) site. Disordered stretches follow at residues 217–242 and 277–303; these read GGHN…VNGR and SEYG…DEGM. The segment covering 229–240 has biased composition (polar residues); it reads RPSQSSLPSSVN. Basic and acidic residues predominate over residues 289-298; the sequence is PEMKRMKREG. A DNA-binding region (WRKY 2) is located at residues 322-387; that stretch reads SDIDVLIDGF…YEGRHNHDIP (66 aa). Zn(2+) contacts are provided by Cys-353, Cys-358, His-382, and His-384.

It belongs to the WRKY group I family. As to quaternary structure, interacts with MKS1. Interacts with SIB1. Interacts with VQ10 and CAMBP25/VQ15. Phosphorylated by MPK4. Highly expressed in roots and at lower levels in leaves, stems and seeds.

Its subcellular location is the nucleus. Functionally, transcription factor. Interacts specifically with the W box (5'-(T)TGAC[CT]-3'), a frequently occurring elicitor-responsive cis-acting element. Functions with WRKY33 as positive regulator of salt stress response and abscisic acid (ABA) signaling. Plays a partial role in heat stress tolerance. Functions with WRKY26 and WRKY33 as positive regulator of plant thermotolerance by partially participating in ethylene-response signal transduction pathway. This is Probable WRKY transcription factor 25 (WRKY25) from Arabidopsis thaliana (Mouse-ear cress).